The following is a 145-amino-acid chain: Trafficking protein particle complex subunit 1 (145 aa).

This sequence belongs to the TRAPP small subunits family. BET5 subfamily. As to quaternary structure, part of the multisubunit transport protein particle (TRAPP) complex. The heterodimer TRAPPC6B-TRAPPC3 interacts with TRAPPC1 likely providing a core for TRAPP complex formation.

Its subcellular location is the golgi apparatus. It localises to the cis-Golgi network. The protein localises to the endoplasmic reticulum. May play a role in vesicular transport from endoplasmic reticulum to Golgi. The sequence is that of Trafficking protein particle complex subunit 1 (TRAPPC1) from Bos taurus (Bovine).